Here is a 328-residue protein sequence, read N- to C-terminus: Beta-ketoacyl-[acyl-carrier-protein] synthase III (328 aa).

Residues cysteine 122 and histidine 255 contribute to the active site. The interval 256 to 260 (QANVR) is ACP-binding. Asparagine 285 is an active-site residue.

It belongs to the thiolase-like superfamily. FabH family. Homodimer.

It localises to the cytoplasm. The enzyme catalyses malonyl-[ACP] + acetyl-CoA + H(+) = 3-oxobutanoyl-[ACP] + CO2 + CoA. Its pathway is lipid metabolism; fatty acid biosynthesis. In terms of biological role, catalyzes the condensation reaction of fatty acid synthesis by the addition to an acyl acceptor of two carbons from malonyl-ACP. Catalyzes the first condensation reaction which initiates fatty acid synthesis and may therefore play a role in governing the total rate of fatty acid production. Possesses both acetoacetyl-ACP synthase and acetyl transacylase activities. Its substrate specificity determines the biosynthesis of branched-chain and/or straight-chain of fatty acids. The protein is Beta-ketoacyl-[acyl-carrier-protein] synthase III of Bordetella pertussis (strain Tohama I / ATCC BAA-589 / NCTC 13251).